The chain runs to 130 residues: Small ribosomal subunit protein uS8 (130 aa).

The protein belongs to the universal ribosomal protein uS8 family. In terms of assembly, part of the 30S ribosomal subunit. Contacts proteins S5 and S12.

In terms of biological role, one of the primary rRNA binding proteins, it binds directly to 16S rRNA central domain where it helps coordinate assembly of the platform of the 30S subunit. The chain is Small ribosomal subunit protein uS8 from Shewanella frigidimarina (strain NCIMB 400).